The sequence spans 305 residues: tRNA pseudouridine synthase B (305 aa).

Residue Asp41 is the Nucleophile of the active site.

It belongs to the pseudouridine synthase TruB family. Type 1 subfamily.

The catalysed reaction is uridine(55) in tRNA = pseudouridine(55) in tRNA. Responsible for synthesis of pseudouridine from uracil-55 in the psi GC loop of transfer RNAs. This chain is tRNA pseudouridine synthase B, found in Prochlorococcus marinus (strain MIT 9515).